The sequence spans 334 residues: Type II methyltransferase M.NlaIII (334 aa).

The protein belongs to the N(4)/N(6)-methyltransferase family.

The enzyme catalyses a 2'-deoxyadenosine in DNA + S-adenosyl-L-methionine = an N(6)-methyl-2'-deoxyadenosine in DNA + S-adenosyl-L-homocysteine + H(+). Its function is as follows. A methylase, recognizes the double-stranded sequence 5'-CATG-3', methylates A-2 on both strands and protects the DNA from cleavage by the NlaIII endonuclease. The sequence is that of Type II methyltransferase M.NlaIII (nlaIIIM) from Neisseria lactamica.